Consider the following 754-residue polypeptide: Cytosolic neutral trehalase (754 aa).

The span at 1-10 shows a compositional bias: polar residues; the sequence is MDGKVNNNPP. Disordered regions lie at residues 1–47 and 54–73; these read MDGK…LSKN and TFSV…YTSP. Residues D117, D119, N121, Q123, and D128 each coordinate Ca(2+). Residues R305, 312 to 313, N349, 358 to 360, E427, R476, and G479 each bind substrate; these read WD and RSQ. Active-site proton donor/acceptor residues include D481 and E676.

It belongs to the glycosyl hydrolase 37 family. The cofactor is Ca(2+).

Its subcellular location is the cytoplasm. The catalysed reaction is alpha,alpha-trehalose + H2O = alpha-D-glucose + beta-D-glucose. The protein operates within carbohydrate degradation. Hydrolyzes intracellular trehalose to glucose. The disaccharide trehalose serves as a storage molecule for energy and carbohydrates that is mobilized during nutrient stress. The protein is Cytosolic neutral trehalase of Kluyveromyces lactis (strain ATCC 8585 / CBS 2359 / DSM 70799 / NBRC 1267 / NRRL Y-1140 / WM37) (Yeast).